Here is a 61-residue protein sequence, read N- to C-terminus: MFPLKKSLLLLFFLGTINFSFCEEERNAEEERRDDPEERDVAMEKRVLPLVGNLLNDLLGK.

Positions 1–22 are cleaved as a signal peptide; the sequence is MFPLKKSLLLLFFLGTINFSFC. A propeptide spanning residues 23-44 is cleaved from the precursor; that stretch reads EEERNAEEERRDDPEERDVAME. Leu59 is modified (leucine amide).

The protein belongs to the frog skin active peptide (FSAP) family. Temporin subfamily. In terms of tissue distribution, expressed by the skin glands.

Its subcellular location is the secreted. Functionally, antimicrobial peptide. The polypeptide is Temporin-CDYa (Rana dybowskii (Dybovsky's frog)).